Reading from the N-terminus, the 401-residue chain is uncharacterized protein (401 aa).

[4Fe-4S] cluster-binding residues include C7, C13, C16, and C94. Positions 230, 259, 280, and 328 each coordinate S-adenosyl-L-methionine. The active-site Nucleophile is the C355.

It belongs to the class I-like SAM-binding methyltransferase superfamily. RNA M5U methyltransferase family.

This is an uncharacterized protein from Chlamydia pneumoniae (Chlamydophila pneumoniae).